The primary structure comprises 524 residues: GMP synthase [glutamine-hydrolyzing] (524 aa).

The Glutamine amidotransferase type-1 domain maps to 10 to 199 (PVLVVDFGAQ…LTEVAGLEQT (190 aa)). Catalysis depends on Cys87, which acts as the Nucleophile. Catalysis depends on residues His173 and Glu175. The region spanning 200 to 398 (WTSANIAQQL…LGLPEEIVAR (199 aa)) is the GMPS ATP-PPase domain. 228-234 (SGGVDSA) serves as a coordination point for ATP.

As to quaternary structure, homodimer.

It catalyses the reaction XMP + L-glutamine + ATP + H2O = GMP + L-glutamate + AMP + diphosphate + 2 H(+). Its pathway is purine metabolism; GMP biosynthesis; GMP from XMP (L-Gln route): step 1/1. Its function is as follows. Catalyzes the synthesis of GMP from XMP. This chain is GMP synthase [glutamine-hydrolyzing] (guaA), found in Corynebacterium ammoniagenes (Brevibacterium ammoniagenes).